Consider the following 502-residue polypeptide: Arginine decarboxylase (502 aa).

Lys42 bears the N6-(pyridoxal phosphate)lysine mark. A substrate-binding site is contributed by 226 to 236 (IDIGGGLGIDY).

This sequence belongs to the Orn/Lys/Arg decarboxylase class-II family. SpeA subfamily. Pyridoxal 5'-phosphate is required as a cofactor. Requires Mg(2+) as cofactor.

It catalyses the reaction L-arginine + H(+) = agmatine + CO2. The protein operates within amine and polyamine biosynthesis; agmatine biosynthesis; agmatine from L-arginine: step 1/1. The protein is Arginine decarboxylase of Solanum lycopersicum (Tomato).